Reading from the N-terminus, the 321-residue chain is Fructose-1,6-bisphosphatase 2 class 2 (321 aa).

D32, E56, D84, and E87 together coordinate Mn(2+). Residues 87–89 (EGT), Y118, 163–165 (KPR), 185–187 (DGD), and G209 each bind substrate. E212 lines the Mn(2+) pocket.

The protein belongs to the FBPase class 2 family. In terms of assembly, homodimer. Mn(2+) is required as a cofactor.

It carries out the reaction beta-D-fructose 1,6-bisphosphate + H2O = beta-D-fructose 6-phosphate + phosphate. Its activity is regulated as follows. Competitively inhibited by low concentrations of phosphate (IC50 of 1.2 mM) and is also sensitive to Li(+) (IC50 of 15.8 mM). Also inhibited by 1 mM ATP or 50 mM KCl (60% and 20% residual activity, respectively). Slightly activated (40-50%) by the addition of 1 mM dithiothreitol in vitro. Its function is as follows. Catalyzes the hydrolysis of fructose 1,6-bisphosphate to fructose 6-phosphate. Also displays a low activity toward glucose 1,6-bisphosphate, and no activity against ribulose 1,5-bisphosphate, fructose 2,6-bisphosphate, or fructose 1-phosphate. This Escherichia coli (strain K12) protein is Fructose-1,6-bisphosphatase 2 class 2 (yggF).